Consider the following 67-residue polypeptide: DNA-directed RNA polymerase subunit omega (67 aa).

It belongs to the RNA polymerase subunit omega family. The RNAP catalytic core consists of 2 alpha, 1 beta, 1 beta' and 1 omega subunit. When a sigma factor is associated with the core the holoenzyme is formed, which can initiate transcription.

The enzyme catalyses RNA(n) + a ribonucleoside 5'-triphosphate = RNA(n+1) + diphosphate. Functionally, promotes RNA polymerase assembly. Latches the N- and C-terminal regions of the beta' subunit thereby facilitating its interaction with the beta and alpha subunits. The chain is DNA-directed RNA polymerase subunit omega from Ralstonia pickettii (strain 12J).